A 251-amino-acid polypeptide reads, in one-letter code: Flap endonuclease Xni (251 aa).

Residue Asp104 participates in Mg(2+) binding. A 5'-3' exonuclease domain is found at 160–249 (VQPQQLPDYW…IDGNLQQLRL (90 aa)). 5 residues coordinate K(+): Leu171, Ala172, Pro180, Val182, and Ile185. Positions 184–189 (GIGPKS) are interaction with DNA.

Belongs to the Xni family. Mg(2+) is required as a cofactor. Requires K(+) as cofactor.

Its function is as follows. Has flap endonuclease activity. During DNA replication, flap endonucleases cleave the 5'-overhanging flap structure that is generated by displacement synthesis when DNA polymerase encounters the 5'-end of a downstream Okazaki fragment. The chain is Flap endonuclease Xni from Escherichia coli O6:K15:H31 (strain 536 / UPEC).